The chain runs to 406 residues: Nuclear hormone receptor family member nhr-133 (406 aa).

Residues 8-83 (SGPCEICEQP…VGMNSSKFQN (76 aa)) constitute a DNA-binding region (nuclear receptor). The segment at 11–31 (CEICEQPAHGNHFGVLSCRAC) adopts an NR C4-type zinc-finger fold. The NR C4-type; degenerate zinc-finger motif lies at 47-66 (DRVCRKGNCIGNDLYRCKIC). An NR LBD domain is found at 150 to 406 (YSWSPNHYPN…YSHPEMFEFS (257 aa)).

This sequence belongs to the nuclear hormone receptor family.

The protein resides in the nucleus. In terms of biological role, orphan nuclear receptor. The chain is Nuclear hormone receptor family member nhr-133 from Caenorhabditis elegans.